The chain runs to 354 residues: Protein RecA (354 aa).

67 to 74 (GPESSGKT) provides a ligand contact to ATP. The interval 331-354 (GGANSSDSKTESDENIDLETGEVF) is disordered. Residues 343–354 (DENIDLETGEVF) are compositionally biased toward acidic residues.

The protein belongs to the RecA family.

The protein resides in the cytoplasm. Functionally, can catalyze the hydrolysis of ATP in the presence of single-stranded DNA, the ATP-dependent uptake of single-stranded DNA by duplex DNA, and the ATP-dependent hybridization of homologous single-stranded DNAs. It interacts with LexA causing its activation and leading to its autocatalytic cleavage. The sequence is that of Protein RecA from Shewanella frigidimarina (strain NCIMB 400).